The primary structure comprises 332 residues: Ferredoxin--NADP reductase (332 aa).

FAD contacts are provided by Glu-35, Gln-43, Tyr-48, Val-88, Phe-122, Asp-286, and Ser-326.

This sequence belongs to the ferredoxin--NADP reductase type 2 family. As to quaternary structure, homodimer. FAD serves as cofactor.

The enzyme catalyses 2 reduced [2Fe-2S]-[ferredoxin] + NADP(+) + H(+) = 2 oxidized [2Fe-2S]-[ferredoxin] + NADPH. The sequence is that of Ferredoxin--NADP reductase from Limosilactobacillus reuteri (strain DSM 20016) (Lactobacillus reuteri).